Consider the following 331-residue polypeptide: Glycerophosphodiester phosphodiesterase 1 (331 aa).

Topologically, residues 1–3 (MWL) are cytoplasmic. The helical transmembrane segment at 4–24 (WEDQGGLLGPFSFVLVLLLVV) threads the bilayer. The Lumenal portion of the chain corresponds to 25 to 248 (TRSPFNACVL…PRYSVFWKQS (224 aa)). The region spanning 65–331 (VSAIAHRGGS…SMLEDCAPHF (267 aa)) is the GP-PDE domain. Mg(2+)-binding residues include Glu-97 and Asp-99. Asn-168 carries an N-linked (GlcNAc...) asparagine glycan. Asp-174 is a Mg(2+) binding site. Residues 249 to 269 (VFVVLDILLDWSMHNVLWYLC) traverse the membrane as a helical segment. Residues 270-331 (GISAFLMQKD…SMLEDCAPHF (62 aa)) are Cytoplasmic-facing.

Belongs to the glycerophosphoryl diester phosphodiesterase family. Interacts with PRAF2. Interacts with RGS16. The cofactor is Mg(2+). N-glycosylated. Widely expressed. Highly expressed in the brain and spinal cord, followed by kidney, liver, and testis. In contrast, little or no expression is detected in the heart or spleen.

The protein resides in the cell membrane. It is found in the cytoplasmic vesicle membrane. It carries out the reaction sn-glycero-3-phospho-1D-myo-inositol + H2O = myo-inositol + sn-glycerol 3-phosphate + H(+). The enzyme catalyses 1-O-(1Z-octadecenyl)-sn-glycero-3-phospho-(N-5Z,8Z,11Z,14Z-eicosatetraenoyl)-ethanolamine + H2O = 1-O-(1Z-octadecenyl)-sn-glycero-3-phosphate + N-(5Z,8Z,11Z,14Z-eicosatetraenoyl)-ethanolamine + H(+). The catalysed reaction is 1-O-(1Z-octadecenyl)-sn-glycero-3-phospho-(N-9Z-octadecenoyl)-ethanolamine + H2O = 1-O-(1Z-octadecenyl)-sn-glycero-3-phosphate + N-(9Z-octadecenoyl) ethanolamine + H(+). It catalyses the reaction 1-O-(1Z-octadecenyl)-sn-glycero-3-phospho-N-hexadecanoyl-ethanolamine + H2O = 1-O-(1Z-octadecenyl)-sn-glycero-3-phosphate + N-hexadecanoylethanolamine + H(+). It carries out the reaction N-(4Z,7Z,10Z,13Z,16Z,19Z)-docosahexaenoyl-sn-glycero-3-phosphoethanolamine + H2O = N-(4Z,7Z,10Z,13Z,16Z,19Z)-docosahexaenoyl ethanolamine + sn-glycerol 3-phosphate + H(+). The enzyme catalyses N-eicosanoyl-sn-glycero-3-phosphoethanolamine + H2O = N-eicosanoyl ethanolamine + sn-glycerol 3-phosphate + H(+). The catalysed reaction is N-hexadecanoyl-sn-glycero-3-phosphoethanolamine + H2O = N-hexadecanoylethanolamine + sn-glycerol 3-phosphate + H(+). It catalyses the reaction N-(9Z-octadecenoyl)-sn-glycero-3-phosphoethanolamine + H2O = N-(9Z-octadecenoyl) ethanolamine + sn-glycerol 3-phosphate + H(+). It carries out the reaction N-(5Z,8Z,11Z,14Z-eicosatetraenoyl)-sn-glycero-3-phosphoethanolamine + H2O = N-(5Z,8Z,11Z,14Z-eicosatetraenoyl)-ethanolamine + sn-glycerol 3-phosphate + H(+). Inhibited by EDTA, calcium chloride, and zinc chloride. Enhanced by magnesium chloride. Glycerophosphodiester phosphodiesterase activity can be modulated by G-protein signaling pathways. Its function is as follows. Hydrolyzes the phosphodiester bond of glycerophosphodiesters such as glycerophosphoinositol (GroPIns) and glycerophosphoethanolamine (GroPEth), to yield a glycerol phosphate and an alcohol. Hydrolyzes glycerophospho-N-acylethanolamines to N-acylethanolamines in the brain and participates in bioactive N-acylethanolamine biosynthesis such as anandamide (an endocannabinoid), N-palmitoylethanolamine (an anti-inflammatory), and N-oleoylethanolamine (an anorexic). In addition, has a lysophospholipase D activity by hydrolyzing N-acyl-lysoplasmenylethanolamine (N-acyl-lysoPlsEt) to N-acylethanolamine. However lysophospholipase D activity is lower than glycerophosphodiester phosphodiesterase activity. Has little or no activity towards glycerophosphocholine. The polypeptide is Glycerophosphodiester phosphodiesterase 1 (Mus musculus (Mouse)).